We begin with the raw amino-acid sequence, 163 residues long: Single-stranded DNA-binding protein 1 (163 aa).

The SSB domain maps to 1–104 (MINNVVLVGR…VVAESFQLLE (104 aa)). A disordered region spans residues 106-163 (RATREGGSPNSYNNGGYNNAPSNNSYSASSQQTPNFSRDESPFGNSNPMDISDDDLPF). Over residues 111–135 (GGSPNSYNNGGYNNAPSNNSYSASS) the composition is skewed to low complexity. The Important for interaction with partner proteins motif lies at 158–163 (DDDLPF).

In terms of assembly, homotetramer.

In terms of biological role, plays an important role in DNA replication, recombination and repair. Binds to ssDNA and to an array of partner proteins to recruit them to their sites of action during DNA metabolism. This Streptococcus agalactiae serotype III (strain NEM316) protein is Single-stranded DNA-binding protein 1 (ssb1).